Consider the following 324-residue polypeptide: Aquaporin-4 (324 aa).

Topologically, residues Met-1 to Lys-36 are cytoplasmic. S-palmitoyl cysteine attachment occurs at residues Cys-13 and Cys-17. A helical membrane pass occupies residues Ala-37–Ile-57. The Extracellular segment spans residues Asn-58 to Asp-69. A helical membrane pass occupies residues Met-70–Gly-89. Residues His-90–Gly-93 are Cytoplasmic-facing. An intramembrane region (discontinuously helical) is located at residues Gly-94–Thr-101. Positions Asn-97 to Ala-99 match the NPA 1 motif. The Cytoplasmic segment spans residues Val-102 to Ser-115. Ser-111 carries the post-translational modification Phosphoserine; by PKG. A helical transmembrane segment spans residues Val-116–Val-136. Residues Thr-137 to Thr-155 are Extracellular-facing. An N-linked (GlcNAc...) asparagine glycan is attached at Asn-153. A helical transmembrane segment spans residues Ala-156 to Ala-176. Residues Ser-177–Asp-184 are Cytoplasmic-facing. Phosphoserine; by PKC is present on Ser-180. A helical transmembrane segment spans residues Val-185–Ile-205. N-linked (GlcNAc...) asparagine glycosylation occurs at Asn-206. Residues Asn-206–Thr-208 are Extracellular-facing. The discontinuously helical intramembrane region spans Gly-209–Val-222. The short motif at Asn-213–Ala-215 is the NPA 2 element. The Extracellular portion of the chain corresponds to Ile-223–Trp-231. A helical transmembrane segment spans residues Ile-232–Phe-252. At Cys-253–His-324 the chain is on the cytoplasmic side. 2 positions are modified to phosphoserine: Ser-276 and Ser-285. Position 289 is a phosphothreonine (Thr-289). Basic and acidic residues predominate over residues Asp-305 to Ser-316. Positions Asp-305 to His-324 are disordered.

The protein belongs to the MIP/aquaporin (TC 1.A.8) family. In terms of assembly, homotetramer. The tetramers can form oligomeric arrays in membranes. The size of the oligomers differs between tissues and is smaller in skeletal muscle than in brain. Interaction between AQP4 oligomeric arrays in close-by cells can contribute to cell-cell adhesion. Part of a complex containing MLC1, TRPV4, HEPACAM and ATP1B1. Phosphorylation by PKC at Ser-180 reduces conductance by 50%. Phosphorylation by PKG at Ser-111 in response to glutamate increases conductance by 40%. Post-translationally, isoform 2: Palmitoylated on its N-terminal region. Isoform 1: Not palmitoylated. Not expressed in kidney, Detectable in gastric parietal and brain astroglial cells. The absence of AQP4 in kidney may be critical for the extreme urinary concentration that occurs in this species (up to 5,000 mosmol/kg H(2)O).

Its subcellular location is the cell membrane. The protein localises to the basolateral cell membrane. It localises to the endosome membrane. The protein resides in the sarcolemma. It is found in the cell projection. The enzyme catalyses H2O(in) = H2O(out). Its function is as follows. Forms a water-specific channel. Plays an important role in brain water homeostasis and in glymphatic solute transport. Required for a normal rate of water exchange across the blood brain interface. Required for normal levels of cerebrospinal fluid influx into the brain cortex and parenchyma along paravascular spaces that surround penetrating arteries, and for normal drainage of interstitial fluid along paravenous drainage pathways. Thereby, it is required for normal clearance of solutes from the brain interstitial fluid, including soluble beta-amyloid peptides derived from APP. Plays a redundant role in urinary water homeostasis and urinary concentrating ability. In Dipodomys merriami (Merriam's kangaroo rat), this protein is Aquaporin-4 (AQP4).